The primary structure comprises 244 residues: ATP synthase subunit a (244 aa).

7 consecutive transmembrane segments (helical) span residues 20 to 40, 81 to 101, 113 to 133, 140 to 160, 176 to 196, 202 to 222, and 223 to 243; these read FFDI…VIVI, GILF…LNVM, QLLV…IWGF, FLNI…LVFI, LFAN…AAIY, FIGI…LGIA, and FLQA…IINL.

It belongs to the ATPase A chain family. In terms of assembly, F-type ATPases have 2 components, CF(1) - the catalytic core - and CF(0) - the membrane proton channel. CF(1) has five subunits: alpha(3), beta(3), gamma(1), delta(1), epsilon(1). CF(0) has three main subunits: a, b and c.

It is found in the mitochondrion inner membrane. Functionally, mitochondrial membrane ATP synthase (F(1)F(0) ATP synthase or Complex V) produces ATP from ADP in the presence of a proton gradient across the membrane which is generated by electron transport complexes of the respiratory chain. F-type ATPases consist of two structural domains, F(1) - containing the extramembraneous catalytic core and F(0) - containing the membrane proton channel, linked together by a central stalk and a peripheral stalk. During catalysis, ATP synthesis in the catalytic domain of F(1) is coupled via a rotary mechanism of the central stalk subunits to proton translocation. Key component of the proton channel; it may play a direct role in the translocation of protons across the membrane. The protein is ATP synthase subunit a (atp6) of Dictyostelium discoideum (Social amoeba).